Here is a 108-residue protein sequence, read N- to C-terminus: Putative pterin-4-alpha-carbinolamine dehydratase (108 aa).

It belongs to the pterin-4-alpha-carbinolamine dehydratase family.

The catalysed reaction is (4aS,6R)-4a-hydroxy-L-erythro-5,6,7,8-tetrahydrobiopterin = (6R)-L-erythro-6,7-dihydrobiopterin + H2O. This is Putative pterin-4-alpha-carbinolamine dehydratase from Chromobacterium violaceum (strain ATCC 12472 / DSM 30191 / JCM 1249 / CCUG 213 / NBRC 12614 / NCIMB 9131 / NCTC 9757 / MK).